The chain runs to 249 residues: 5'-nucleotidase SurE (249 aa).

A divalent metal cation is bound by residues Asp-8, Asp-9, Ser-39, and Asn-91.

It belongs to the SurE nucleotidase family. A divalent metal cation serves as cofactor.

It localises to the cytoplasm. It catalyses the reaction a ribonucleoside 5'-phosphate + H2O = a ribonucleoside + phosphate. Nucleotidase that shows phosphatase activity on nucleoside 5'-monophosphates. This Magnetococcus marinus (strain ATCC BAA-1437 / JCM 17883 / MC-1) protein is 5'-nucleotidase SurE.